We begin with the raw amino-acid sequence, 463 residues long: Xanthone prenyltransferase B (463 aa).

The protein belongs to the tryptophan dimethylallyltransferase family.

It functions in the pathway secondary metabolite biosynthesis. Mn(2+) and Co(2+) strongly enhance prenylation activity. Its function is as follows. Dehydrogenase involved in the conversion of monodictyphenone to the prenyl xanthones such as emericellin, shamixanthone and epishamixanthone. Monodictyphenone is first converted to variecoxanthone A via a paeciloxanthone intermediate by the consecutive actions of the FAD-dependent monooxygenase mdpD and the xanthone prenyltransferase xptB. XptB catalyzes regular O-prenylation at the hydroxy group of C-7 of the xanthone ring. Variecoxanthone A is further prenylated to emericellin by xptA before being reduced to shamixanthone and epishamixanthone by the dehydrogenase xptC. This Emericella nidulans (strain FGSC A4 / ATCC 38163 / CBS 112.46 / NRRL 194 / M139) (Aspergillus nidulans) protein is Xanthone prenyltransferase B.